The chain runs to 164 residues: Inner membrane assembly complex subunit 17 (164 aa).

The N-terminal 28 residues, methionine 1–arginine 28, are a transit peptide targeting the mitochondrion. Residues serine 29–arginine 97 are Mitochondrial matrix-facing. Residues proline 98 to tryptophan 118 form a helical membrane-spanning segment. Over lysine 119 to tryptophan 164 the chain is Mitochondrial intermembrane. Positions alanine 121 to threonine 149 form a coiled coil.

It belongs to the INA17 family. As to quaternary structure, component of the inner membrane assembly (INA) complex, composed of INA17 and INA22. Interacts with a subset of F(1)F(0)-ATP synthase subunits of the F(1)-domain and the peripheral stalk.

The protein resides in the mitochondrion inner membrane. Its function is as follows. Component of the INA complex (INAC) that promotes the biogenesis of mitochondrial F(1)F(0)-ATP synthase. INAC facilitates the assembly of the peripheral stalk and promotes the assembly of the catalytic F(1)-domain with the membrane-embedded F(0)-domain. The polypeptide is Inner membrane assembly complex subunit 17 (Candida glabrata (strain ATCC 2001 / BCRC 20586 / JCM 3761 / NBRC 0622 / NRRL Y-65 / CBS 138) (Yeast)).